A 667-amino-acid chain; its full sequence is Probable potassium transport system protein Kup (667 aa).

Transmembrane regions (helical) follow at residues 16–36, 58–78, 101–121, 146–166, 167–187, 221–241, 253–273, 294–314, 343–363, 373–393, 399–419, and 424–444; these read GFII…LYTM, VSLI…LIAL, WLII…ALTP, TNVI…QRFG, TGVI…VLGI, IFIL…YSDL, WPFV…WILA, VYLV…LISG, LYIP…VLYF, YGLA…YYLI, PLLA…FFLA, and FMHG…VMVI.

The protein belongs to the HAK/KUP transporter (TC 2.A.72) family.

The protein localises to the cell membrane. The catalysed reaction is K(+)(in) + H(+)(in) = K(+)(out) + H(+)(out). Its function is as follows. Transport of potassium into the cell. Likely operates as a K(+):H(+) symporter. The sequence is that of Probable potassium transport system protein Kup from Streptococcus equi subsp. equi (strain 4047).